The chain runs to 444 residues: Beta-D-glucosyl crocetin beta-1,6-glucosyltransferase (444 aa).

His9 acts as the Proton acceptor in catalysis. An an anthocyanidin-binding site is contributed by His9. The active-site Charge relay is the Asp108. The UDP-alpha-D-glucose site is built by Thr130, Ala319, Gln321, His336, Trp339, Asn340, Ser341, Glu344, Asp360, and Gln361.

This sequence belongs to the UDP-glycosyltransferase family. As to expression, ubiquitous.

It carries out the reaction beta-D-glucosyl crocetin + UDP-alpha-D-glucose = beta-D-gentiobiosyl crocetin + UDP + H(+). The enzyme catalyses bis(beta-D-glucosyl) crocetin + UDP-alpha-D-glucose = beta-D-gentiobiosyl beta-D-glucosyl crocetin + UDP + H(+). It catalyses the reaction beta-D-gentiobiosyl beta-D-glucosyl crocetin + UDP-alpha-D-glucose = bis(beta-D-gentiobiosyl) crocetin + UDP + H(+). Glucosyltransferase catalyzing the beta 1-6 glucosylation of the sugar moiety of crocetin glucosyl esters to produce crocetin gentiobiosyl esters. Weak activity toward curcumin glucosides, but no activity with flavonoid glucosides, coumarin glucosides, 4-nitrophenyl glucoside or crocetin. Involved with UGT75L6 in sequential glycosylation of crocetin to crocin (bis(beta-D-gentiobiosyl) crocetin). This chain is Beta-D-glucosyl crocetin beta-1,6-glucosyltransferase (UGT94E5), found in Gardenia jasminoides (Cape jasmine).